The primary structure comprises 319 residues: V-set and transmembrane domain-containing protein 4 (319 aa).

The N-terminal stretch at 1-23 (MRLRLLALAAAVLLGPAPEVCGA) is a signal peptide. Residues 24–154 (LNVTVSPGPV…SSATEMRVIS (131 aa)) form the Ig-like domain. Asn-25 and Asn-41 each carry an N-linked (GlcNAc...) asparagine glycan. Cys-46 and Cys-126 are disulfide-bonded. Residue Asn-143 is glycosylated (N-linked (GlcNAc...) asparagine). Residues 180-200 (AVLVCCVGILSVLLFTLVIAW) form a helical membrane-spanning segment.

In terms of processing, proteolytically cleaved to generate a bioactive peptide. As to expression, peptide Lv is widely expressed in various tissues and the central nervous system, including the retinal photoreceptor layer, hippocampus, olfactory bulb, and cerebellum.

The protein localises to the cell membrane. It localises to the secreted. In terms of biological role, peptide Lv enhances L-type voltage-gated calcium channel (L-VGCC) currents in retinal photoreceptors. The sequence is that of V-set and transmembrane domain-containing protein 4 (Vstm4) from Mus musculus (Mouse).